The sequence spans 105 residues: Nucleoid-associated protein MW0434 (105 aa).

The segment at 1–33 is disordered; it reads MRGGGNMQQMMKQMQKMQKKMAQEQEKLKEERI. A compositionally biased stretch (low complexity) spans 7-16; the sequence is MQQMMKQMQK. Basic and acidic residues predominate over residues 21-33; the sequence is MAQEQEKLKEERI.

The protein belongs to the YbaB/EbfC family. In terms of assembly, homodimer.

It localises to the cytoplasm. The protein resides in the nucleoid. Binds to DNA and alters its conformation. May be involved in regulation of gene expression, nucleoid organization and DNA protection. In Staphylococcus aureus (strain MW2), this protein is Nucleoid-associated protein MW0434.